A 431-amino-acid chain; its full sequence is Enolase (431 aa).

Q163 provides a ligand contact to (2R)-2-phosphoglycerate. E205 acts as the Proton donor in catalysis. Residues D242, E288, and D315 each coordinate Mg(2+). K340, R369, S370, and K391 together coordinate (2R)-2-phosphoglycerate. The active-site Proton acceptor is K340.

The protein belongs to the enolase family. Mg(2+) serves as cofactor.

It is found in the cytoplasm. It localises to the secreted. The protein resides in the cell surface. It catalyses the reaction (2R)-2-phosphoglycerate = phosphoenolpyruvate + H2O. Its pathway is carbohydrate degradation; glycolysis; pyruvate from D-glyceraldehyde 3-phosphate: step 4/5. In terms of biological role, catalyzes the reversible conversion of 2-phosphoglycerate (2-PG) into phosphoenolpyruvate (PEP). It is essential for the degradation of carbohydrates via glycolysis. This is Enolase from Bacillus cereus (strain G9842).